The sequence spans 239 residues: Succinate dehydrogenase [ubiquinone] iron-sulfur subunit (239 aa).

The 2Fe-2S ferredoxin-type domain maps to 24 to 99; that stretch reads AEAKFSVHPI…NANIITIYPL (76 aa). Residues Cys-63, Cys-68, Cys-71, and Cys-83 each contribute to the [2Fe-2S] cluster site. Residues 142–172 form the 4Fe-4S ferredoxin-type domain; it reads DRSELNGIYECILCACCSASCPSYWWNHDKY. Residues Cys-152, Cys-155, and Cys-158 each coordinate [4Fe-4S] cluster. [3Fe-4S] cluster is bound at residue Cys-162. Trp-167 is a binding site for a ubiquinone. Residues Cys-209 and Cys-215 each coordinate [3Fe-4S] cluster. Cys-219 serves as a coordination point for [4Fe-4S] cluster.

The protein belongs to the succinate dehydrogenase/fumarate reductase iron-sulfur protein family. In terms of assembly, component of complex II composed of four subunits: a flavoprotein (FP), an iron-sulfur protein (IP), and a cytochrome b composed of a large and a small subunit. The cofactor is [2Fe-2S] cluster. It depends on [3Fe-4S] cluster as a cofactor. Requires [4Fe-4S] cluster as cofactor.

It localises to the mitochondrion inner membrane. It carries out the reaction a quinone + succinate = fumarate + a quinol. It functions in the pathway carbohydrate metabolism; tricarboxylic acid cycle; fumarate from succinate (eukaryal route): step 1/1. Functionally, iron-sulfur protein (IP) subunit of succinate dehydrogenase (SDH) that is involved in complex II of the mitochondrial electron transport chain and is responsible for transferring electrons from succinate to ubiquinone (coenzyme Q). The protein is Succinate dehydrogenase [ubiquinone] iron-sulfur subunit (SDH2) of Porphyra purpurea (Red seaweed).